Reading from the N-terminus, the 571-residue chain is Proline--tRNA ligase (571 aa).

Belongs to the class-II aminoacyl-tRNA synthetase family. ProS type 1 subfamily. Homodimer.

The protein resides in the cytoplasm. The enzyme catalyses tRNA(Pro) + L-proline + ATP = L-prolyl-tRNA(Pro) + AMP + diphosphate. Catalyzes the attachment of proline to tRNA(Pro) in a two-step reaction: proline is first activated by ATP to form Pro-AMP and then transferred to the acceptor end of tRNA(Pro). As ProRS can inadvertently accommodate and process non-cognate amino acids such as alanine and cysteine, to avoid such errors it has two additional distinct editing activities against alanine. One activity is designated as 'pretransfer' editing and involves the tRNA(Pro)-independent hydrolysis of activated Ala-AMP. The other activity is designated 'posttransfer' editing and involves deacylation of mischarged Ala-tRNA(Pro). The misacylated Cys-tRNA(Pro) is not edited by ProRS. This chain is Proline--tRNA ligase, found in Pseudomonas fluorescens (strain ATCC BAA-477 / NRRL B-23932 / Pf-5).